Consider the following 142-residue polypeptide: Large ribosomal subunit protein uL11 (142 aa).

The protein belongs to the universal ribosomal protein uL11 family. In terms of assembly, part of the ribosomal stalk of the 50S ribosomal subunit. Interacts with L10 and the large rRNA to form the base of the stalk. L10 forms an elongated spine to which L12 dimers bind in a sequential fashion forming a multimeric L10(L12)X complex. One or more lysine residues are methylated.

In terms of biological role, forms part of the ribosomal stalk which helps the ribosome interact with GTP-bound translation factors. The polypeptide is Large ribosomal subunit protein uL11 (Vibrio cholerae serotype O1 (strain ATCC 39541 / Classical Ogawa 395 / O395)).